We begin with the raw amino-acid sequence, 291 residues long: ATP synthase gamma chain (291 aa).

This sequence belongs to the ATPase gamma chain family. As to quaternary structure, F-type ATPases have 2 components, CF(1) - the catalytic core - and CF(0) - the membrane proton channel. CF(1) has five subunits: alpha(3), beta(3), gamma(1), delta(1), epsilon(1). CF(0) has three main subunits: a, b and c.

The protein resides in the cell inner membrane. In terms of biological role, produces ATP from ADP in the presence of a proton gradient across the membrane. The gamma chain is believed to be important in regulating ATPase activity and the flow of protons through the CF(0) complex. The sequence is that of ATP synthase gamma chain from Burkholderia thailandensis (strain ATCC 700388 / DSM 13276 / CCUG 48851 / CIP 106301 / E264).